The primary structure comprises 117 residues: Large ribosomal subunit protein uL18 (117 aa).

This sequence belongs to the universal ribosomal protein uL18 family. In terms of assembly, part of the 50S ribosomal subunit; part of the 5S rRNA/L5/L18/L25 subcomplex. Contacts the 5S and 23S rRNAs.

In terms of biological role, this is one of the proteins that bind and probably mediate the attachment of the 5S RNA into the large ribosomal subunit, where it forms part of the central protuberance. This chain is Large ribosomal subunit protein uL18, found in Phytoplasma mali (strain AT).